Here is a 305-residue protein sequence, read N- to C-terminus: MRVAFFGTPLWAVPVLDALRKRHQVVLVVSQPDKPQGRGLRPAPSPVARYAEAEGLPLLRPARLREEAFLEALRQAAPEVAVVAAYGKLIPKEALDIPPHGFLNLHPSLLPKYRGAAPVQRALLAGERETGVSIMRLDEGLDTGPLYAVWRTPILPDEDAVALGNRLRDKGVELLLEVLERLPELTPRPQEGEASYAPPLSKEEGRLDFGESAEALYRRHRAVQPWPGSYFFHRGQRVKALRLRPEPGEGEPGVVARVGPEGVVVGTASGLLLLLEVQPEGRRAMPAADWARGYGVAPGTRLGQV.

108–111 contributes to the (6S)-5,6,7,8-tetrahydrofolate binding site; it reads SLLP.

Belongs to the Fmt family.

It catalyses the reaction L-methionyl-tRNA(fMet) + (6R)-10-formyltetrahydrofolate = N-formyl-L-methionyl-tRNA(fMet) + (6S)-5,6,7,8-tetrahydrofolate + H(+). Its function is as follows. Attaches a formyl group to the free amino group of methionyl-tRNA(fMet). The formyl group appears to play a dual role in the initiator identity of N-formylmethionyl-tRNA by promoting its recognition by IF2 and preventing the misappropriation of this tRNA by the elongation apparatus. The chain is Methionyl-tRNA formyltransferase from Thermus thermophilus (strain ATCC 27634 / DSM 579 / HB8).